The primary structure comprises 96 residues: MNIFLVIHELINQADQVNVTLTNHVGAYIGAGMAMTAAAGVGVGQGFASGLCATALARNPELLPKIQLFWIVGSAIAESSAIYGLIIAFILIFVAR.

2 consecutive transmembrane segments (helical) span residues 24-44 and 75-95; these read HVGA…VGVG and AIAE…IFVA.

This sequence belongs to the ATPase C chain family. In terms of assembly, F-type ATPases have 2 components, F(1) - the catalytic core - and F(0) - the membrane proton channel. F(1) has five subunits: alpha(3), beta(3), gamma(1), delta(1), epsilon(1). F(0) has three main subunits: a(1), b(2) and c(10-14). The alpha and beta chains form an alternating ring which encloses part of the gamma chain. F(1) is attached to F(0) by a central stalk formed by the gamma and epsilon chains, while a peripheral stalk is formed by the delta and b chains.

Its subcellular location is the cell membrane. In terms of biological role, f(1)F(0) ATP synthase produces ATP from ADP in the presence of a proton or sodium gradient. F-type ATPases consist of two structural domains, F(1) containing the extramembraneous catalytic core and F(0) containing the membrane proton channel, linked together by a central stalk and a peripheral stalk. During catalysis, ATP synthesis in the catalytic domain of F(1) is coupled via a rotary mechanism of the central stalk subunits to proton translocation. Its function is as follows. Key component of the F(0) channel; it plays a direct role in translocation across the membrane. A homomeric c-ring of between 10-14 subunits forms the central stalk rotor element with the F(1) delta and epsilon subunits. This is ATP synthase subunit c from Mycoplasmoides gallisepticum (strain R(low / passage 15 / clone 2)) (Mycoplasma gallisepticum).